Here is a 139-residue protein sequence, read N- to C-terminus: HTH-type transcriptional regulator MntR (139 aa).

An HTH dtxR-type domain is found at 1-63 (MPTPSMEDHI…YEKYRGLTLT (63 aa)). Mn(2+)-binding residues include Asp-8, Glu-11, His-77, Glu-99, Glu-102, and His-103.

This sequence belongs to the DtxR/MntR family. In terms of assembly, homodimer.

It is found in the cytoplasm. DNA binding is strongly activated by Mn(2+). Central regulator of manganese homeostasis. This chain is HTH-type transcriptional regulator MntR, found in Lysinibacillus sphaericus (strain C3-41).